Reading from the N-terminus, the 382-residue chain is Mitogen-activated protein kinase 9 (382 aa).

In terms of domain architecture, Protein kinase spans 26–321 (YQQLKPIGSG…VDEALRHPYI (296 aa)). ATP-binding positions include 33–38 (GSGAQG) and Lys55. Catalysis depends on Asp151, which acts as the Proton acceptor. Thr183 bears the Phosphothreonine mark. The short motif at 183 to 185 (TPY) is the TXY element. A Phosphotyrosine modification is found at Tyr185.

It belongs to the protein kinase superfamily. CMGC Ser/Thr protein kinase family. MAP kinase subfamily. Mg(2+) serves as cofactor. Dually phosphorylated on Thr-183 and Tyr-185, which activates the enzyme. As to expression, expressed in the neuroepithelium of developing brain at stages 16 to 26.

The enzyme catalyses L-seryl-[protein] + ATP = O-phospho-L-seryl-[protein] + ADP + H(+). The catalysed reaction is L-threonyl-[protein] + ATP = O-phospho-L-threonyl-[protein] + ADP + H(+). With respect to regulation, activated by threonine and tyrosine phosphorylation. Responds to activation by environmental stress and pro-inflammatory cytokines by phosphorylating a number of transcription factors, primarily components of AP-1 such as JUN and ATF2 and thus regulates AP-1 transcriptional activity. May play a role in the development of the central nervous system during embryogenesis. May play a role in the regulation of the circadian clock. The chain is Mitogen-activated protein kinase 9 (MAPK9) from Gallus gallus (Chicken).